Here is a 144-residue protein sequence, read N- to C-terminus: Large ribosomal subunit protein uL15 (144 aa).

Residues 1 to 54 form a disordered region; that stretch reads MRLNTLSPAPGRVSAKKRVGRGIGSGLGKTAGRGHKGLKSRSGGSVKPGFEGGQ. A compositionally biased stretch (gly residues) spans 21-31; sequence RGIGSGLGKTA.

It belongs to the universal ribosomal protein uL15 family. In terms of assembly, part of the 50S ribosomal subunit.

Functionally, binds to the 23S rRNA. This is Large ribosomal subunit protein uL15 from Saccharophagus degradans (strain 2-40 / ATCC 43961 / DSM 17024).